Reading from the N-terminus, the 1423-residue chain is MFAFLWKISLCLLVLGVITGDPQAVAAEEKQAKDASPTPQLGVWQFASPSLPPELRKLHGIVEAEQVNRHLLRRRKRSILFPSGVKICPDESVEQAIANHLKYFRLRVCQETVWEVFKTFWDRLPEREEYHTWMSLCEEGTMSIFEMGMNFSQSEEHRSLIVKKLSYTKEAMAGSCTDWSCGGTPTPASDADATTLRDAAANVPPPHEVSIESPPGGTSHEIEDADTTINNEIKKEDEIPVRPVTEQMIEFSIVIAGEKYSEELSDPDTAKYQLLSEQFVSQIQNVFEGLPGYKNIHVLEFSSPEEDSGVEVHYAVTFDGEAISNATWDLINLHSNKVEDNSFMGIEDNPTVVYTISDFQDYIAEILQKNALLENTSLTLDPNSLQLINVKEILHPTQEDPSWITEHPTVLEHVEFDDNTFSAERPSADESTVSNTLPFDFTKPDSTLDSEESDDNEIRPRPESLDSEVSLIPEAPLSSEADVTSLPDGLXLADWNQTPALVTAPVIEHDSLDSLEWLSAPDSSDEFEDTGLSDDFLLPSSPSSHLVPEEPPSTDDYTAPLLSAPTVASSSVIETDTKRTVTAEKEVVTQGSPADSSSADSLLHEXVEESPFPLEVHPVEGEXDIYLGDRMIFDDGSGSAFDGSGKGMEPSIWPWDVATLEPVFYPGPDSWLDDDNDSLPFRTEDIPEGLILDYILNSGNKLDDDPSKDENEGVASIKENFLDESEIFVFPETTTQQVPLLQTGEPSSVETSTQMETLSMDDDSFVKPSFVLEPPEDYSFADLPTGEDLFLPHSTGVSVEDTLLTSTVTLGXEDSLLTSTVAFSVEQPEESSVGQEIISEAXEHQNEDRPTVEELFTAGQSNVGEAATVGYLDKSSLETVLTAEPFEVSTDTSTEEQQSLDSSLADRDTGLAIRKPADVWPTDRVLEKTLDQTVQSAVPTAAQVSTAVPSLIHQATALEGFAGQDGTEHDTHVSMSISTILNSYVTITADTVELPSHLPPMTTTVSSSVVTLAKVGDETTRVLDVSVDLDHVSMVSFSPEPSEEAKSMTDSHMELTTHAHSTEMAGVAWPTHEIHNSTPVPSRALVVFFSLRVTNMMFSEDLFNKNSPEYKALEQRFLELLVPYLQSNLTGFQNLEILNFRNGSIVVNSRMKFAKPVPRNVTNAVYMILEDFCNTAYHTMNLAIDKYSLDVESGEQADPCKFQACNEFSECLVNRWSGEAECVCNPGYLSIDGLPCNSICDLQPNFCLNDGKCDISPGQGAICRCRVGENWWYRGEHCEEYVSEPLVVGIAIASVAGFLLVASAVIFFLARTLRDQYTKSDTEDSQGQGDSLSSIENAVKYNPMYESDTTGYSHYYRRYPQLTSYSSTSAETSTDYSSEEIRHIYENSELTKEEIQDRIRIIELYAKDRQFAEFVRQHQMKLL.

The N-terminal stretch at 1–27 (MFAFLWKISLCLLVLGVITGDPQAVAA) is a signal peptide. At 28–1289 (EEKQAKDASP…EYVSEPLVVG (1262 aa)) the chain is on the extracellular side. N150 carries N-linked (GlcNAc...) asparagine glycosylation. The SEA 1 domain maps to 245–358 (TEQMIEFSIV…NPTVVYTISD (114 aa)). The segment at 265 to 273 (SDPDTAKYQ) is hyaluronan-binding motif involved in chondroitin sulfate A-binding. Residues N325 and N375 are each glycosylated (N-linked (GlcNAc...) asparagine). Disordered regions lie at residues 423-469 (AERP…DSEV), 522-559 (DSSD…DYTA), and 577-602 (TKRT…ADSL). Over residues 523 to 532 (SSDEFEDTGL) the composition is skewed to acidic residues. Residues 537–546 (LLPSSPSSHL) show a composition bias toward low complexity. Residues 577–587 (TKRTVTAEKEV) show a composition bias toward basic and acidic residues. N676 is a glycosylation site (N-linked (GlcNAc...) asparagine). The tract at residues 886-907 (FEVSTDTSTEEQQSLDSSLADR) is disordered. The span at 889–902 (STDTSTEEQQSLDS) shows a compositional bias: polar residues. The region spanning 1083-1196 (RALVVFFSLR…YSLDVESGEQ (114 aa)) is the SEA 2 domain. N-linked (GlcNAc...) asparagine glycosylation is found at N1128, N1142, and N1160. EGF-like domains are found at residues 1196–1234 (QADP…IDGL) and 1237–1279 (NSIC…EHCE). 5 disulfide bridges follow: C1200–C1211, C1205–C1222, C1240–C1253, C1247–C1263, and C1265–C1278. The tract at residues 1266-1274 (RVGENWWYR) is hyaluronan-binding motif involved in chondroitin sulfate C-binding. The chain crosses the membrane as a helical span at residues 1290 to 1310 (IAIASVAGFLLVASAVIFFLA). Over 1311 to 1423 (RTLRDQYTKS…FVRQHQMKLL (113 aa)) the chain is Cytoplasmic. Positions 1322–1327 (TEDSQG) are hyaluronan-binding motif involved in chondroitin sulfate C-binding.

In terms of processing, highly glycosylated (N- and O-linked carbohydrates). Expressed in retina.

It is found in the photoreceptor outer segment membrane. It localises to the photoreceptor inner segment membrane. The protein localises to the secreted. The protein resides in the extracellular space. Its subcellular location is the extracellular matrix. It is found in the interphotoreceptor matrix. In terms of biological role, chondroitin sulfate- and hyaluronan-binding proteoglycan involved in the organization of interphotoreceptor matrix. In Gallus gallus (Chicken), this protein is Interphotoreceptor matrix proteoglycan 2 (IMPG2).